The chain runs to 339 residues: MVREKVRISTRTLQWKCVESRADSKRLYYGRFILSPLMKGQADTIGIAMRRALLGEIEGTCITRAKSKKIPHEFSTITGIQESIHEILMNLKEIVLRSNLYGTHDASICVKGPGCVTAQDIILPPSVEIIDNTQHIASLREPIDLHIGLEIERNRGYCMKPPKNFQDGSYSIDAVFMPVRNANHSVHSYGNGNEKQEILFLEIWTNGSLTPKEALHEASRNLIDLFIPFLHAEEENFHLEKNQHKITLPLFAFHDRLAKLRKNQKEIALKSIFIDQLELAPKIYNCLKRSNIHTLWDLLKNSQEDLMKIEHFRIEDVKHIFGILKIEKHFTINLPKNKF.

The tract at residues Met-1–Glu-233 is alpha N-terminal domain (alpha-NTD). The tract at residues Ile-267–Phe-339 is alpha C-terminal domain (alpha-CTD).

This sequence belongs to the RNA polymerase alpha chain family. In terms of assembly, in plastids the minimal PEP RNA polymerase catalytic core is composed of four subunits: alpha, beta, beta', and beta''. When a (nuclear-encoded) sigma factor is associated with the core the holoenzyme is formed, which can initiate transcription.

The protein localises to the plastid. It localises to the chloroplast. It catalyses the reaction RNA(n) + a ribonucleoside 5'-triphosphate = RNA(n+1) + diphosphate. Its function is as follows. DNA-dependent RNA polymerase catalyzes the transcription of DNA into RNA using the four ribonucleoside triphosphates as substrates. The protein is DNA-directed RNA polymerase subunit alpha of Populus trichocarpa (Western balsam poplar).